A 70-amino-acid polypeptide reads, in one-letter code: uncharacterized protein (70 aa).

This is an uncharacterized protein from Sinorhizobium fredii (strain NBRC 101917 / NGR234).